A 150-amino-acid polypeptide reads, in one-letter code: Deoxyuridine 5'-triphosphate nucleotidohydrolase (150 aa).

Residues 69 to 71 (RSG), asparagine 82, 86 to 88 (LID), and lysine 96 contribute to the substrate site.

Belongs to the dUTPase family. Mg(2+) serves as cofactor.

The enzyme catalyses dUTP + H2O = dUMP + diphosphate + H(+). It functions in the pathway pyrimidine metabolism; dUMP biosynthesis; dUMP from dCTP (dUTP route): step 2/2. Its function is as follows. This enzyme is involved in nucleotide metabolism: it produces dUMP, the immediate precursor of thymidine nucleotides and it decreases the intracellular concentration of dUTP so that uracil cannot be incorporated into DNA. This chain is Deoxyuridine 5'-triphosphate nucleotidohydrolase, found in Neisseria gonorrhoeae (strain ATCC 700825 / FA 1090).